The following is a 122-amino-acid chain: uncharacterized protein (122 aa).

3 consecutive transmembrane segments (helical) span residues 33–53 (ALGL…LTIP), 58–78 (VLGV…LLRW), and 97–117 (PGYL…LVVA).

It to E.coli YidH.

It localises to the cell membrane. This is an uncharacterized protein from Mycobacterium tuberculosis (strain CDC 1551 / Oshkosh).